A 1002-amino-acid chain; its full sequence is Calmin (1002 aa).

Positions Met1 to Glu288 are actin-binding. Residues Asn32–Gln139 form the Calponin-homology (CH) 1 domain. Residues Arg149–Ser168 show a composition bias toward low complexity. The segment at Arg149–Ala180 is disordered. In terms of domain architecture, Calponin-homology (CH) 2 spans Arg187–Pro291. 2 positions are modified to phosphoserine: Ser301 and Ser402. Disordered stretches follow at residues Gln389–Asn418, Asn500–Thr532, Asn581–Leu716, and Asp749–Ile911. Residues Ser396–Ser409 are compositionally biased toward low complexity. Residues Asn500 to Asn509 are compositionally biased toward polar residues. Residues Ser585–Gly606 are compositionally biased toward basic and acidic residues. Positions Lys607–Lys617 are enriched in basic residues. 2 stretches are compositionally biased toward basic and acidic residues: residues Asp618–Ser635 and Pro650–Glu659. At Ser619 the chain carries Phosphoserine. Over residues Gly681–Leu697 the composition is skewed to low complexity. Thr699 is modified (phosphothreonine). Phosphoserine is present on residues Ser713 and Ser769. Positions Gly776 to Ser794 are enriched in low complexity. Basic and acidic residues predominate over residues Pro818 to Asp834. Over residues Ser835 to Asn846 the composition is skewed to polar residues. Phosphoserine occurs at positions 838 and 841. Basic and acidic residues predominate over residues Asn854–Lys863. Residues Tyr898–Ser910 are compositionally biased toward polar residues. The residue at position 907 (Ser907) is a Phosphoserine. Residues Met977–Leu997 traverse the membrane as a helical; Anchor for type IV membrane protein segment.

In terms of tissue distribution, widely expressed at intermediate level.

It localises to the membrane. The chain is Calmin (CLMN) from Homo sapiens (Human).